The sequence spans 959 residues: MSSDEKGISPAHKTSTPTHRSASSSTSSQRESRQSIHVLERTASSSTEPSVSRQLLEPEPIPLSKEADSWEIIEGLKIGQTNVQKPDRHEGFMLKKRKWPLKGWHKRFFVLDNGMLKYSKAPLDIQKGKVHGSIDVGLSVMSIKKKARRIDLDTEEHIYHLKVKSQDWFDAWVSKLRHHRLYRQNEIVRSPRDASFHIFPATSTAESSPAANVSVVDGKMQPNSFPWQSPLPCSNSLPATCTTGQSKVAAWLQDSEEMDRCAEDLAHCQSNLVELSKLLQNLEILQRTQSAPNFTDMQANCVDISKKDKRVTRRWRTKSVSKDTKIQLQEGPPAKGQFNTTRRRQRLAAAVATTVPFSATMSPVRLHSSNPNLCADIEFQTPPSHLTDPLESSTDYTKLQEEFCLIAQKVHSLLKSAFNSIAIEKEKLKQVVSEQDHNKGHSTQMARLRQSLSQALNQNAELRSRLNRIHSESTICDHVVSVNIIPSPDEPGEQIHVSLPLSQQVANESRLSMSESVSEFFDAQEVLLSASSSENEASDDESYISDVSDNISEDNTSVADNISRQILNGELTGGAFRNGRRTCLPAPCPDTSNINLWNILRNNIGKDLSKVSMPVELNEPLNTLQHLCEEMEYSELLDKASETDDPYERMVLVAAFAVSGYCSTYFRAGSKPFNPVLGETYECIREDKGFRFFSEQVSHHPPISACHCESKNFVFWQDIRWKNKFWGKSMEILPVGTLNVTLPKYGDYYVWNKVTTCIHNILSGRRWIEHYGEVTLRNTKSSVCICKLTFVKVNYWNSNVNEVQGVVIDQEGKVVHRLFGKWHEGLYCGVAPSAKCIWRPGSLPTNYELYYGFTRFAVELNELDPVLKDLLPPTDARFRPDQRFLEEGNLEAAAAEKQRVEELQRSRRRYMEENNLEHIPKFFKKVIDANQREAWVSNDTYWELRKDPGFSKVDSPVLW.

The segment at 1–60 is disordered; that stretch reads MSSDEKGISPAHKTSTPTHRSASSSTSSQRESRQSIHVLERTASSSTEPSVSRQLLEPEP. Ser-2 bears the N-acetylserine mark. The span at 14 to 29 shows a compositional bias: low complexity; it reads TSTPTHRSASSSTSSQ. The span at 30–40 shows a compositional bias: basic and acidic residues; that stretch reads RESRQSIHVLE. At Ser-35 the chain carries Phosphoserine. A compositionally biased stretch (polar residues) spans 42–53; that stretch reads TASSSTEPSVSR. The PH domain maps to 86–181; sequence PDRHEGFMLK…WVSKLRHHRL (96 aa). Residues Ser-190 and Ser-290 each carry the phosphoserine modification.

This sequence belongs to the OSBP family. In terms of assembly, homodimer. Interacts with OSBPL3. Expressed in skin, respiratory epithelium, small intestine epithelium, pancreas, striated muscle, brain, spinal ganglia, and nervous plexus of the intestine (at protein level). In the brain, specifically in the cerebellum, it is expressed in Purkinje and granule cells. Expressed in hepatocytes and macrophages.

The protein resides in the nucleus envelope. The protein localises to the cytoplasm. Its subcellular location is the cytosol. It is found in the endoplasmic reticulum membrane. It localises to the cell membrane. The protein resides in the endosome membrane. Functionally, regulates cellular transport and efflux of cholesterol. Plays a role in phosphatidylinositol-4-phophate (PI4P) turnover at the neuronal membrane. Binds via its PH domain PI4P, phosphatidylinositol-4,5-diphosphate, phosphatidylinositol-3,4,5-triphosphate, and phosphatidic acid. Weakly binds 25-hydroxycholesterol. The chain is Oxysterol-binding protein-related protein 6 (Osbpl6) from Mus musculus (Mouse).